A 465-amino-acid chain; its full sequence is Fusarisetin A cluster transcription factor fsa5 (465 aa).

Positions Cys13 to Cys47 form a DNA-binding region, zn(2)-C6 fungal-type. Positions Ser58–Pro88 are disordered. Residues Ser68 to Val84 show a composition bias toward polar residues.

The protein resides in the nucleus. Functionally, transcription activator that specifically regulates the expression of the gene cluster that mediates the biosynthesis of fusarisetin A. This Fusarium sp. (strain FN080326) protein is Fusarisetin A cluster transcription factor fsa5.